The following is a 315-amino-acid chain: Taste receptor type 2 member 3 (315 aa).

Over 1 to 5 (MGLTE) the chain is Extracellular. The chain crosses the membrane as a helical span at residues 6–26 (GVFLILSGTQFTLGILVNCFI). The Cytoplasmic portion of the chain corresponds to 27–41 (ELVNGSSWFKTKRMS). Residues 42–62 (LSDFIITTLALLRIILLCIIL) form a helical membrane-spanning segment. Over 63 to 93 (TDSFLIEFSPNTHDSGIIMQIIDVSWTFTNH) the chain is Extracellular. Residues 94–114 (LSIWLATCLGVLYCLKIASFS) traverse the membrane as a helical segment. Over 115–127 (HPTFLWLKWRVSR) the chain is Cytoplasmic. Residues 128–148 (VMVWMLLGALLLSCGSTASLI) form a helical membrane-spanning segment. The Extracellular segment spans residues 149–185 (NEFKLYSVFRGIEATRNVTEHFRKKRSEYYLIHVLGT). A glycan (N-linked (GlcNAc...) asparagine) is linked at asparagine 165. The helical transmembrane segment at 186 to 206 (LWYLPPLIVSLASYSLLIFSL) threads the bilayer. The Cytoplasmic segment spans residues 207–233 (GRHTRQMLQNGTSSRDPTTEAHKRAIR). The helical transmembrane segment at 234-254 (IILSFFFLFLLYFLAFLIASF) threads the bilayer. Residues 255-265 (GNFLPKTKMAK) are Extracellular-facing. A helical membrane pass occupies residues 266–286 (MIGEVMTMFYPAGHSFILILG). Residues 287–315 (NSKLKQTFVVMLRCESGHLKPGSKGPIFS) are Cytoplasmic-facing.

This sequence belongs to the G-protein coupled receptor T2R family.

It localises to the membrane. In terms of biological role, gustducin-coupled receptor implicated in the perception of bitter compounds in the oral cavity and the gastrointestinal tract. Signals through PLCB2 and the calcium-regulated cation channel TRPM5. This Gorilla gorilla gorilla (Western lowland gorilla) protein is Taste receptor type 2 member 3 (TAS2R3).